The chain runs to 599 residues: Growth factor receptor-bound protein 10 (599 aa).

Residues 1–23 (MNNDINSSVESLNSACNMQSDTD) show a composition bias toward polar residues. Residues 1–122 (MNNDINSSVE…QPPAKHFPPG (122 aa)) are disordered. The segment covering 32-43 (QSASNQPSASSS) has biased composition (low complexity). The span at 44-61 (RGQPQASPRQKMQRSQPV) shows a compositional bias: polar residues. A Phosphoserine modification is found at Ser-50. A compositionally biased stretch (pro residues) spans 97–118 (GSPPSVAPSSLPPPPSQPPAKH). Phosphoserine; by MTOR, MAPK1 and MAPK3 is present on Ser-98. The Ras-associating domain maps to 171 to 255 (LRKDVKVFSE…SKFLFRKNYA (85 aa)). The PH domain maps to 295 to 404 (CPEIQGFLQV…WMTAFRLLKY (110 aa)). The residue at position 433 (Ser-433) is a Phosphoserine; by MTOR and PKB/AKT1. Ser-436 is subject to Phosphoserine. Position 481 is a phosphoserine; by MTOR, MAPK1 and MAPK3 (Ser-481). One can recognise an SH2 domain in the interval 498–594 (WFHGRISREE…VLPCKLKHHC (97 aa)).

Belongs to the GRB7/10/14 family. As to quaternary structure, interacts with ligand-activated tyrosine kinase receptors, including FGFR1, INSR, IGF1R, MET and PDGFRB in a phosphotyrosine-dependent manner through the SH2 domain. Poorly binds to the EGFR. Directly interacts with MAP3K14/NIK and is recruited to the EGFR-ERBB2 complex. Interacts with GIGYF1/PERQ1 and GIGYF2/TNRC15. When unphosphorylated, interacts with AKT1 and when phosphorylated with YWHAE/14-3-3 epsilon. Interacts with NEDD4. Interacts with LRP6, thus interfering with the binding of AXIN1 to LRP6. Binds relatively non-specifically to several phosphoinositides, including PI(5)P, PI(4,5)P2, PI(3,4)P2 and PI(3,4,5)P3, with modest affinities through the PH domain. Binds to activated NRAS. Phosphorylated on serine residues upon EGF, FGF and PDGF stimulation.

The protein localises to the cytoplasm. Phosphorylation by mTORC1 stabilizes and activates GRB10 constituting a feedback pathway by which mTORC1 inhibits INSR-dependent signaling. Functionally, adapter protein which modulates coupling of a number of cell surface receptor kinases with specific signaling pathways. Binds to, and suppress signals from, activated receptors tyrosine kinases, including the insulin (INSR) and insulin-like growth factor (IGF1R) receptors. The inhibitory effect can be achieved by 2 mechanisms: interference with the signaling pathway and increased receptor degradation. Delays and reduces AKT1 phosphorylation in response to insulin stimulation. Blocks association between INSR and IRS1 and IRS2 and prevents insulin-stimulated IRS1 and IRS2 tyrosine phosphorylation. Recruits NEDD4 to IGF1R, leading to IGF1R ubiquitination, increased internalization and degradation by both the proteasomal and lysosomal pathways. A similar role in the mediation of ubiquitination also has been suggested with INSR. Negatively regulates Wnt signaling by interacting with LRP6 intracellular portion and interfering with the binding of AXIN1 to LRP6. Positive regulator of the KDR/VEGFR-2 signaling pathway. May inhibit NEDD4-mediated degradation of KDR/VEGFR-2. The sequence is that of Growth factor receptor-bound protein 10 (Grb10) from Rattus norvegicus (Rat).